The sequence spans 166 residues: ATP synthase subunit b (166 aa).

The chain crosses the membrane as a helical span at residues 10 to 30; sequence LLFWMIVSFGIVFVILSKYGF.

It belongs to the ATPase B chain family. As to quaternary structure, F-type ATPases have 2 components, F(1) - the catalytic core - and F(0) - the membrane proton channel. F(1) has five subunits: alpha(3), beta(3), gamma(1), delta(1), epsilon(1). F(0) has three main subunits: a(1), b(2) and c(10-14). The alpha and beta chains form an alternating ring which encloses part of the gamma chain. F(1) is attached to F(0) by a central stalk formed by the gamma and epsilon chains, while a peripheral stalk is formed by the delta and b chains.

The protein resides in the cell inner membrane. Its function is as follows. F(1)F(0) ATP synthase produces ATP from ADP in the presence of a proton or sodium gradient. F-type ATPases consist of two structural domains, F(1) containing the extramembraneous catalytic core and F(0) containing the membrane proton channel, linked together by a central stalk and a peripheral stalk. During catalysis, ATP synthesis in the catalytic domain of F(1) is coupled via a rotary mechanism of the central stalk subunits to proton translocation. Component of the F(0) channel, it forms part of the peripheral stalk, linking F(1) to F(0). The polypeptide is ATP synthase subunit b (Parabacteroides distasonis (strain ATCC 8503 / DSM 20701 / CIP 104284 / JCM 5825 / NCTC 11152)).